The following is a 228-amino-acid chain: Ribonuclease 3 (228 aa).

One can recognise an RNase III domain in the interval leucine 8–aspartate 130. Glutamate 43 is a binding site for Mg(2+). The active site involves aspartate 47. Residues aspartate 116 and glutamate 119 each contribute to the Mg(2+) site. Residue glutamate 119 is part of the active site. Positions aspartate 157–glycine 226 constitute a DRBM domain.

The protein belongs to the ribonuclease III family. As to quaternary structure, homodimer. Mg(2+) is required as a cofactor.

It localises to the cytoplasm. It catalyses the reaction Endonucleolytic cleavage to 5'-phosphomonoester.. Its function is as follows. Digests double-stranded RNA. Involved in the processing of primary rRNA transcript to yield the immediate precursors to the large and small rRNAs (23S and 16S). Processes some mRNAs, and tRNAs when they are encoded in the rRNA operon. Processes pre-crRNA and tracrRNA of type II CRISPR loci if present in the organism. The chain is Ribonuclease 3 from Psychromonas ingrahamii (strain DSM 17664 / CCUG 51855 / 37).